Consider the following 493-residue polypeptide: Probable cytosol aminopeptidase (493 aa).

Mn(2+) contacts are provided by lysine 262 and aspartate 267. Lysine 274 is an active-site residue. Positions 285, 344, and 346 each coordinate Mn(2+). Arginine 348 is an active-site residue.

It belongs to the peptidase M17 family. Mn(2+) is required as a cofactor.

The protein resides in the cytoplasm. The catalysed reaction is Release of an N-terminal amino acid, Xaa-|-Yaa-, in which Xaa is preferably Leu, but may be other amino acids including Pro although not Arg or Lys, and Yaa may be Pro. Amino acid amides and methyl esters are also readily hydrolyzed, but rates on arylamides are exceedingly low.. It carries out the reaction Release of an N-terminal amino acid, preferentially leucine, but not glutamic or aspartic acids.. In terms of biological role, presumably involved in the processing and regular turnover of intracellular proteins. Catalyzes the removal of unsubstituted N-terminal amino acids from various peptides. The polypeptide is Probable cytosol aminopeptidase (Xanthomonas campestris pv. campestris (strain 8004)).